The chain runs to 102 residues: uncharacterized protein (102 aa).

Residues 1–41 are disordered; the sequence is MAAPRQIAFYGKGGTGKPKRKPEPVTASKEDRCLGSPSKNK.

It to the N-terminal of nitrogenase iron protein (NifH). Has lost the ATP-binding site.

This protein is either not expressed, expressed at low levels or rapidly degraded. This is an uncharacterized protein from Rhizobium meliloti (Ensifer meliloti).